The following is a 576-amino-acid chain: Arginine--tRNA ligase (576 aa).

The short motif at Pro-122–His-132 is the 'HIGH' region element.

Belongs to the class-I aminoacyl-tRNA synthetase family. As to quaternary structure, monomer.

The protein resides in the cytoplasm. It carries out the reaction tRNA(Arg) + L-arginine + ATP = L-arginyl-tRNA(Arg) + AMP + diphosphate. This is Arginine--tRNA ligase from Erwinia tasmaniensis (strain DSM 17950 / CFBP 7177 / CIP 109463 / NCPPB 4357 / Et1/99).